We begin with the raw amino-acid sequence, 741 residues long: Hemolysin (741 aa).

The signal sequence occupies residues 1 to 25 (MPKLNRCAIAIFTILSAISSPTLLA). Residues 26-157 (NINEPSGEAA…RSGFASPAPA (132 aa)) constitute a propeptide that is removed on maturation. Intrachain disulfides connect Cys182–Cys200, Cys497–Cys511, and Cys537–Cys549. Positions 484–575 (RPVNLQLASF…LTNVYSGESL (92 aa)) constitute a Ricin B-type lectin domain. The interval 607 to 741 (NAQESSPILG…LVKGVQFDLN (135 aa)) is beta-prism domain.

Belongs to the HlyA hemolysin family. Monomer. Homoheptamer. After binding to target membranes the protein assembles into a heptameric pre-pore complex. Proteolytic cleavage triggers a conformation change that is required for membrane insertion and pore formation. Proteolytical cleavage is required to convert the 80 kDa hemolysin precursor into the active 65 kDa hemolysin.

It localises to the secreted. Its subcellular location is the host cell membrane. Its function is as follows. Bacterial hemolysin that causes cytolysis by forming heptameric pores in target host membranes. The chain is Hemolysin (hlyA) from Vibrio cholerae serotype O1 (strain ATCC 39315 / El Tor Inaba N16961).